A 184-amino-acid polypeptide reads, in one-letter code: Female-specific protein transformer (184 aa).

2 stretches are compositionally biased toward basic and acidic residues: residues 1 to 39 (MKMDADSSGTEHRDSRGSRSRSWREREHHGRTSERDSRK) and 49 to 58 (DEVREQDRIR). Disordered regions lie at residues 1–123 (MKMD…PKII) and 146–184 (YQRLPRPPPFPPAPFRYRQRQPFMGAPRFGYRNAGRPPY). Composition is skewed to basic residues over residues 59 to 75 (SLRQRAHQSTRRTRSRS) and 84 to 114 (SRHRRHRQRSRSRNRSRSRSSERRRRQRSPH). The segment covering 150–159 (PRPPPFPPAP) has biased composition (pro residues).

The protein resides in the nucleus speckle. Member of the regulatory pathway controlling female somatic sexual differentiation, regulated by Sxl. Activates dsx female-specific splicing by promoting the formation of a splicing enhancer complex which consists of tra, tra2 and sr proteins. This Drosophila simulans (Fruit fly) protein is Female-specific protein transformer (tra).